The primary structure comprises 189 residues: Threonylcarbamoyl-AMP synthase (189 aa).

The 184-residue stretch at 6–189 (TAIFTPIIDA…VLTGEQIRQG (184 aa)) folds into the YrdC-like domain.

Belongs to the SUA5 family. TsaC subfamily.

It is found in the cytoplasm. It carries out the reaction L-threonine + hydrogencarbonate + ATP = L-threonylcarbamoyladenylate + diphosphate + H2O. In terms of biological role, required for the formation of a threonylcarbamoyl group on adenosine at position 37 (t(6)A37) in tRNAs that read codons beginning with adenine. Catalyzes the conversion of L-threonine, HCO(3)(-)/CO(2) and ATP to give threonylcarbamoyl-AMP (TC-AMP) as the acyladenylate intermediate, with the release of diphosphate. The chain is Threonylcarbamoyl-AMP synthase from Serratia proteamaculans (strain 568).